The following is a 509-amino-acid chain: Transcription factor SOX-9 (509 aa).

2 disordered regions span residues 1–67 (MNLL…SEED) and 160–273 (RLRV…FRDV). Residues 30-41 (SAGSPCPSGSGS) are compositionally biased toward low complexity. The span at 42 to 52 (DTENTRPQENT) shows a compositional bias: polar residues. Basic and acidic residues-rich tracts occupy residues 56–67 (GEPDLKKESEED) and 160–174 (RLRVQHKKDHPDYKY). Residues 63–103 (ESEEDKFPVCIREAVSQVLKGYDWTLVPMPVRVNGSSKNKP) are dimerization (DIM). The segment at 63–103 (ESEEDKFPVCIREAVSQVLKGYDWTLVPMPVRVNGSSKNKP) is PQA. S64 bears the Phosphoserine mark. Positions 105 to 173 (VKRPMNAFMV…QHKKDHPDYK (69 aa)) form a DNA-binding region, HMG box. Phosphoserine is present on S211. Residues 224–307 (PGEHSGQSQG…LPPNGHPGVP (84 aa)) form a transactivation domain (TAM) region. 2 consecutive short sequence motifs (9aaTAD) follow at residues 275 to 284 (IGELSSDVIS) and 290 to 298 (DVNEFDQYL). The interval 330 to 415 (SAGHVWMSKQ…HYSEQQQHSP (86 aa)) is disordered. Positions 341–376 (APPPPPQQPPQAPPAPQAPPQPQAAPPQQPAAPPQQ) are enriched in pro residues. A compositionally biased stretch (polar residues) spans 380–415 (HTLTTLSSEPGQSQRTHIKTEQLSPSHYSEQQQHSP). The tract at residues 394-509 (RTHIKTEQLS…QPVYTQLTRP (116 aa)) is transactivation domain (TAC). K398 participates in a covalent cross-link: Glycyl lysine isopeptide (Lys-Gly) (interchain with G-Cter in ubiquitin). A 9aaTAD 3 motif is present at residues 460–468 (TGLYSTFTY). The disordered stretch occupies residues 479–509 (PIADTSGVPSIPQTHSPQHWEQPVYTQLTRP). A compositionally biased stretch (polar residues) spans 485–509 (GVPSIPQTHSPQHWEQPVYTQLTRP).

As to quaternary structure, homodimer; homodimerization is required for activity. Interacts (via C-terminus) with ZNF219; forming a complex that binds to the COL2A1 promoter and activates COL2A1 expression. Interacts with DDRGK1. Interacts with EP300/p300. Interacts with beta-catenin (CTNNB1); inhibiting CTNNB1 activity by competing with the binding sites of TCF/LEF within CTNNB1. Post-translationally, acetylated; acetylation impairs nuclear localization and ability to transactivate expression of target genes. Deacetylated by SIRT1. In terms of processing, phosphorylation at Ser-64 and Ser-211 by PKA increases transcriptional activity and may help delay chondrocyte maturation downstream of PTHLH/PTHrP signaling. Phosphorylation at either Ser-64 or Ser-211 is required for sumoylation, but phosphorylation is not dependent on sumoylation. Phosphorylated on tyrosine residues; tyrosine dephosphorylation by PTPN11/SHP2 blocks SOX9 phosphorylation by PKA and subsequent SUMOylation. Ubiquitinated; ubiquitination leads to proteasomal degradation and is negatively regulated by DDRGK1. Post-translationally, sumoylated; phosphorylation at either Ser-64 or Ser-211 is required for sumoylation. Sumoylation is induced by BMP signaling pathway.

It is found in the nucleus. Its function is as follows. Transcription factor that plays a key role in chondrocytes differentiation and skeletal development. Specifically binds the 5'-ACAAAG-3' DNA motif present in enhancers and super-enhancers and promotes expression of genes important for chondrogenesis, including cartilage matrix protein-coding genes COL2A1, COL4A2, COL9A1, COL11A2 and ACAN, SOX5 and SOX6. Also binds to some promoter regions. Plays a central role in successive steps of chondrocyte differentiation. Absolutely required for precartilaginous condensation, the first step in chondrogenesis during which skeletal progenitors differentiate into prechondrocytes. Together with SOX5 and SOX6, required for overt chondrogenesis when condensed prechondrocytes differentiate into early stage chondrocytes, the second step in chondrogenesis. Later, required to direct hypertrophic maturation and block osteoblast differentiation of growth plate chondrocytes: maintains chondrocyte columnar proliferation, delays prehypertrophy and then prevents osteoblastic differentiation of chondrocytes by lowering beta-catenin (CTNNB1) signaling and RUNX2 expression. Also required for chondrocyte hypertrophy, both indirectly, by keeping the lineage fate of chondrocytes, and directly, by remaining present in upper hypertrophic cells and transactivating COL10A1 along with MEF2C. Low lipid levels are the main nutritional determinant for chondrogenic commitment of skeletal progenitor cells: when lipids levels are low, FOXO (FOXO1 and FOXO3) transcription factors promote expression of SOX9, which induces chondrogenic commitment and suppresses fatty acid oxidation. Mechanistically, helps, but is not required, to remove epigenetic signatures of transcriptional repression and deposit active promoter and enhancer marks at chondrocyte-specific genes. Acts in cooperation with the Hedgehog pathway-dependent GLI (GLI1 and GLI3) transcription factors. In addition to cartilage development, also acts as a regulator of proliferation and differentiation in epithelial stem/progenitor cells: involved in the lung epithelium during branching morphogenesis, by balancing proliferation and differentiation and regulating the extracellular matrix. Controls epithelial branching during kidney development. This is Transcription factor SOX-9 from Homo sapiens (Human).